Here is a 239-residue protein sequence, read N- to C-terminus: Ubiquinone biosynthesis O-methyltransferase (239 aa).

Arginine 44, glycine 63, aspartate 84, and methionine 128 together coordinate S-adenosyl-L-methionine.

This sequence belongs to the methyltransferase superfamily. UbiG/COQ3 family.

The catalysed reaction is a 3-demethylubiquinol + S-adenosyl-L-methionine = a ubiquinol + S-adenosyl-L-homocysteine + H(+). It carries out the reaction a 3-(all-trans-polyprenyl)benzene-1,2-diol + S-adenosyl-L-methionine = a 2-methoxy-6-(all-trans-polyprenyl)phenol + S-adenosyl-L-homocysteine + H(+). Its pathway is cofactor biosynthesis; ubiquinone biosynthesis. O-methyltransferase that catalyzes the 2 O-methylation steps in the ubiquinone biosynthetic pathway. This is Ubiquinone biosynthesis O-methyltransferase from Xanthomonas euvesicatoria pv. vesicatoria (strain 85-10) (Xanthomonas campestris pv. vesicatoria).